Consider the following 326-residue polypeptide: NADH-specific methylglyoxal reductase (326 aa).

NAD(+) is bound by residues 20–21 (TW) and Asp-54. Tyr-59 serves as the catalytic Proton donor. NAD(+) contacts are provided by residues Gln-189, 217-222 (YSPLEQ), Gly-291, and Gln-297.

This sequence belongs to the aldo/keto reductase family. Aldo/keto reductase 11 subfamily. In terms of assembly, monomer.

It catalyses the reaction hydroxyacetone + NAD(+) = methylglyoxal + NADH + H(+). Catalyzes the NADH-dependent reduction of methylglyoxal (2-oxopropanal) in vitro. It is not known if this activity has physiological significance. Cannot use NADPH as a cosubstrate. Seems to play some role in intestinal colonization. This chain is NADH-specific methylglyoxal reductase (ydjG), found in Escherichia coli (strain K12).